The sequence spans 130 residues: L-ectoine synthase (130 aa).

This sequence belongs to the ectoine synthase family.

It carries out the reaction (2S)-4-acetamido-2-aminobutanoate = L-ectoine + H2O. The protein operates within amine and polyamine biosynthesis; ectoine biosynthesis; L-ectoine from L-aspartate 4-semialdehyde: step 3/3. Catalyzes the circularization of gamma-N-acetyl-alpha,gamma-diaminobutyric acid (ADABA) to ectoine (1,4,5,6-tetrahydro-2-methyl-4-pyrimidine carboxylic acid), which is an excellent osmoprotectant. The protein is L-ectoine synthase of Mycolicibacterium gilvum (strain PYR-GCK) (Mycobacterium gilvum (strain PYR-GCK)).